The primary structure comprises 516 residues: uncharacterized protein (516 aa).

The next 5 membrane-spanning stretches (helical) occupy residues 10 to 27 (IRYP…GYWI), 32 to 54 (IGAF…GDFA), 64 to 83 (SFLF…PQFV), 95 to 117 (LLAV…ILGL), and 165 to 187 (AVCY…PALL). RCK C-terminal domains lie at 208–291 (KPGL…SRAE) and 296–376 (RELL…NIGV). Transmembrane regions (helical) follow at residues 386–408 (FVVL…FPVG), 412–430 (IALS…VGHL), 443–465 (GAIS…IHAG), and 480–502 (LLGG…HFVL).

It belongs to the AAE transporter (TC 2.A.81) family.

Its subcellular location is the cell membrane. This is an uncharacterized protein from Bradyrhizobium diazoefficiens (strain JCM 10833 / BCRC 13528 / IAM 13628 / NBRC 14792 / USDA 110).